The following is a 367-amino-acid chain: DNA replication and repair protein RecF (367 aa).

ATP is bound at residue 30 to 37 (GANGSGKT).

This sequence belongs to the RecF family.

The protein localises to the cytoplasm. In terms of biological role, the RecF protein is involved in DNA metabolism; it is required for DNA replication and normal SOS inducibility. RecF binds preferentially to single-stranded, linear DNA. It also seems to bind ATP. The chain is DNA replication and repair protein RecF from Pseudomonas putida (strain ATCC 47054 / DSM 6125 / CFBP 8728 / NCIMB 11950 / KT2440).